The chain runs to 243 residues: Phosphatidylserine decarboxylase proenzyme (243 aa).

Ser-212 (schiff-base intermediate with substrate; via pyruvic acid) is an active-site residue. Ser-212 is modified (pyruvic acid (Ser); by autocatalysis).

This sequence belongs to the phosphatidylserine decarboxylase family. PSD-A subfamily. In terms of assembly, heterodimer of a large membrane-associated beta subunit and a small pyruvoyl-containing alpha subunit. The cofactor is pyruvate. In terms of processing, is synthesized initially as an inactive proenzyme. Formation of the active enzyme involves a self-maturation process in which the active site pyruvoyl group is generated from an internal serine residue via an autocatalytic post-translational modification. Two non-identical subunits are generated from the proenzyme in this reaction, and the pyruvate is formed at the N-terminus of the alpha chain, which is derived from the carboxyl end of the proenzyme. The post-translation cleavage follows an unusual pathway, termed non-hydrolytic serinolysis, in which the side chain hydroxyl group of the serine supplies its oxygen atom to form the C-terminus of the beta chain, while the remainder of the serine residue undergoes an oxidative deamination to produce ammonia and the pyruvoyl prosthetic group on the alpha chain.

Its subcellular location is the cell membrane. It catalyses the reaction a 1,2-diacyl-sn-glycero-3-phospho-L-serine + H(+) = a 1,2-diacyl-sn-glycero-3-phosphoethanolamine + CO2. Its pathway is phospholipid metabolism; phosphatidylethanolamine biosynthesis; phosphatidylethanolamine from CDP-diacylglycerol: step 2/2. Its function is as follows. Catalyzes the formation of phosphatidylethanolamine (PtdEtn) from phosphatidylserine (PtdSer). This chain is Phosphatidylserine decarboxylase proenzyme, found in Mycobacterium leprae (strain Br4923).